Here is a 232-residue protein sequence, read N- to C-terminus: Ribosomal RNA small subunit methyltransferase G (232 aa).

S-adenosyl-L-methionine is bound by residues glycine 75, phenylalanine 80, alanine 126–glutamate 127, and arginine 143.

The protein belongs to the methyltransferase superfamily. RNA methyltransferase RsmG family.

It is found in the cytoplasm. Functionally, specifically methylates the N7 position of a guanine in 16S rRNA. The chain is Ribosomal RNA small subunit methyltransferase G from Fusobacterium nucleatum subsp. nucleatum (strain ATCC 25586 / DSM 15643 / BCRC 10681 / CIP 101130 / JCM 8532 / KCTC 2640 / LMG 13131 / VPI 4355).